Here is a 301-residue protein sequence, read N- to C-terminus: Ribonuclease HIII (301 aa).

The region spanning 90–301 (TPHIGIDESG…LDAILGKVGK (212 aa)) is the RNase H type-2 domain. 3 residues coordinate a divalent metal cation: D96, E97, and D198.

Belongs to the RNase HII family. RnhC subfamily. Mn(2+) is required as a cofactor. Mg(2+) serves as cofactor.

The protein localises to the cytoplasm. It carries out the reaction Endonucleolytic cleavage to 5'-phosphomonoester.. Functionally, endonuclease that specifically degrades the RNA of RNA-DNA hybrids. This is Ribonuclease HIII from Protochlamydia amoebophila (strain UWE25).